A 466-amino-acid chain; its full sequence is Phytase A (466 aa).

The first 19 residues, 1 to 19 (MAVLSVLLPITFLLSSVTG), serve as a signal peptide directing secretion. A disulfide bridge connects residues cysteine 30 and cysteine 39. 1D-myo-inositol hexakisphosphate is bound by residues glutamine 49, tyrosine 50, arginine 80, histidine 81, arginine 84, and threonine 87. Intrachain disulfides connect cysteine 70-cysteine 413, cysteine 214-cysteine 464, cysteine 263-cysteine 281, and cysteine 435-cysteine 443. Catalysis depends on histidine 81, which acts as the Nucleophile. Residues asparagine 104 and asparagine 119 are each glycosylated (N-linked (GlcNAc...) asparagine). Residue arginine 164 participates in 1D-myo-inositol hexakisphosphate binding. N-linked (GlcNAc...) asparagine glycans are attached at residues asparagine 206 and asparagine 219. Lysine 300 contacts 1D-myo-inositol hexakisphosphate. Residues asparagine 338 and asparagine 351 are each glycosylated (N-linked (GlcNAc...) asparagine). 2 residues coordinate 1D-myo-inositol hexakisphosphate: histidine 360 and aspartate 361. N-linked (GlcNAc...) asparagine glycosylation is present at asparagine 375.

The protein belongs to the histidine acid phosphatase family. In terms of assembly, monomer.

Its subcellular location is the secreted. It catalyses the reaction 1D-myo-inositol hexakisphosphate + H2O = 1D-myo-inositol 1,2,4,5,6-pentakisphosphate + phosphate. It carries out the reaction 1D-myo-inositol 1,2,4,5,6-pentakisphosphate + H2O = 1D-myo-inositol 1,2,5,6-tetrakisphosphate + phosphate. The catalysed reaction is 1D-myo-inositol 1,2,5,6-tetrakisphosphate + H2O = 1D-myo-inositol 1,2,6-trisphosphate + phosphate. The enzyme catalyses 1D-myo-inositol 1,2,6-trisphosphate + H2O = 1D-myo-inositol 1,2-bisphosphate + phosphate. It catalyses the reaction 1D-myo-inositol 1,2-bisphosphate + H2O = 1D-myo-inositol 2-phosphate + phosphate. Catalyzes the phosphate monoester hydrolysis of phytic acid (myo-inositol hexakisphosphate), which results in the stepwise formation of myo-inositol pentakis-, tetrakis-, tris-, bis-, and monophosphates, as well as the liberation of inorganic phosphate. Myo-inositol 2-monophosphate is the end product. The protein is Phytase A (phyA) of Aspergillus oryzae (strain ATCC 42149 / RIB 40) (Yellow koji mold).